An 83-amino-acid chain; its full sequence is Short neurotoxin 3FTx-Oxy3 (83 aa).

An N-terminal signal peptide occupies residues 1 to 21; the sequence is MKTLLLTLVVVTIVCLDLGYT. 4 disulfide bridges follow: Cys24-Cys45, Cys38-Cys62, Cys64-Cys75, and Cys76-Cys81.

Belongs to the three-finger toxin family. Short-chain subfamily. Type I alpha-neurotoxin sub-subfamily. As to expression, expressed by the venom gland.

It localises to the secreted. Functionally, binds to muscle nicotinic acetylcholine receptor (nAChR) and inhibit acetylcholine from binding to the receptor, thereby impairing neuromuscular transmission. The protein is Short neurotoxin 3FTx-Oxy3 of Oxyuranus microlepidotus (Inland taipan).